We begin with the raw amino-acid sequence, 314 residues long: Acetyl-coenzyme A carboxylase carboxyl transferase subunit alpha (314 aa).

The CoA carboxyltransferase C-terminal domain occupies 32–289 (EIDMLEASLA…KRTFESHLSE (258 aa)).

Belongs to the AccA family. In terms of assembly, acetyl-CoA carboxylase is a heterohexamer composed of biotin carboxyl carrier protein (AccB), biotin carboxylase (AccC) and two subunits each of ACCase subunit alpha (AccA) and ACCase subunit beta (AccD).

It localises to the cytoplasm. It carries out the reaction N(6)-carboxybiotinyl-L-lysyl-[protein] + acetyl-CoA = N(6)-biotinyl-L-lysyl-[protein] + malonyl-CoA. The protein operates within lipid metabolism; malonyl-CoA biosynthesis; malonyl-CoA from acetyl-CoA: step 1/1. In terms of biological role, component of the acetyl coenzyme A carboxylase (ACC) complex. First, biotin carboxylase catalyzes the carboxylation of biotin on its carrier protein (BCCP) and then the CO(2) group is transferred by the carboxyltransferase to acetyl-CoA to form malonyl-CoA. This Staphylococcus saprophyticus subsp. saprophyticus (strain ATCC 15305 / DSM 20229 / NCIMB 8711 / NCTC 7292 / S-41) protein is Acetyl-coenzyme A carboxylase carboxyl transferase subunit alpha.